A 273-amino-acid chain; its full sequence is Formamidopyrimidine-DNA glycosylase (273 aa).

Proline 2 functions as the Schiff-base intermediate with DNA in the catalytic mechanism. The active-site Proton donor is the glutamate 3. The active-site Proton donor; for beta-elimination activity is the lysine 60. DNA contacts are provided by histidine 94, arginine 113, and arginine 154. Residues 239 to 273 (NAYDREGQPCPRCGATIIKTVVAQRGTHYCPECQR) form an FPG-type zinc finger. The active-site Proton donor; for delta-elimination activity is the arginine 263.

Belongs to the FPG family. In terms of assembly, monomer. Zn(2+) is required as a cofactor.

The enzyme catalyses Hydrolysis of DNA containing ring-opened 7-methylguanine residues, releasing 2,6-diamino-4-hydroxy-5-(N-methyl)formamidopyrimidine.. It catalyses the reaction 2'-deoxyribonucleotide-(2'-deoxyribose 5'-phosphate)-2'-deoxyribonucleotide-DNA = a 3'-end 2'-deoxyribonucleotide-(2,3-dehydro-2,3-deoxyribose 5'-phosphate)-DNA + a 5'-end 5'-phospho-2'-deoxyribonucleoside-DNA + H(+). In terms of biological role, involved in base excision repair of DNA damaged by oxidation or by mutagenic agents. Acts as a DNA glycosylase that recognizes and removes damaged bases. Has a preference for oxidized purines, such as 7,8-dihydro-8-oxoguanine (8-oxoG). Has AP (apurinic/apyrimidinic) lyase activity and introduces nicks in the DNA strand. Cleaves the DNA backbone by beta-delta elimination to generate a single-strand break at the site of the removed base with both 3'- and 5'-phosphates. This chain is Formamidopyrimidine-DNA glycosylase, found in Roseiflexus sp. (strain RS-1).